The sequence spans 376 residues: N-acetyldiaminopimelate deacetylase (376 aa).

Asp69 is a catalytic residue. Glu128 serves as the catalytic Proton acceptor.

The protein belongs to the peptidase M20A family. N-acetyldiaminopimelate deacetylase subfamily.

It carries out the reaction N-acetyl-(2S,6S)-2,6-diaminopimelate + H2O = (2S,6S)-2,6-diaminopimelate + acetate. It participates in amino-acid biosynthesis; L-lysine biosynthesis via DAP pathway; LL-2,6-diaminopimelate from (S)-tetrahydrodipicolinate (acetylase route): step 3/3. Functionally, catalyzes the conversion of N-acetyl-diaminopimelate to diaminopimelate and acetate. This is N-acetyldiaminopimelate deacetylase from Bacillus cereus (strain 03BB102).